A 135-amino-acid chain; its full sequence is Large ribosomal subunit protein uL16c (135 aa).

It belongs to the universal ribosomal protein uL16 family. Part of the 50S ribosomal subunit.

It localises to the plastid. The protein localises to the chloroplast. The polypeptide is Large ribosomal subunit protein uL16c (Vitis vinifera (Grape)).